The sequence spans 269 residues: Small ribosomal subunit protein uS2 (269 aa).

The interval 228 to 269 is disordered; it reads QLDSDDDYEEFDESLAEGDYDDYDEEEDEDSETVSSQEGEEE. The segment covering 230 to 269 has biased composition (acidic residues); the sequence is DSDDDYEEFDESLAEGDYDDYDEEEDEDSETVSSQEGEEE.

It belongs to the universal ribosomal protein uS2 family.

This chain is Small ribosomal subunit protein uS2, found in Crocosphaera subtropica (strain ATCC 51142 / BH68) (Cyanothece sp. (strain ATCC 51142)).